The following is a 149-amino-acid chain: MQVILLDKVANLGSLGDQVNVKAGYARNFLVPKGKAVPATKKNVEYFEARRAELEAKLADVLAAANARAEKINALETVTIASKAGDEGKLFGSIGTRDIADAVTAAGVDVAKSEVRLPNGVLRTTGEHEVNFQVHSEVFAKVIINVVAE.

It belongs to the bacterial ribosomal protein bL9 family.

Binds to the 23S rRNA. The polypeptide is Large ribosomal subunit protein bL9 (Salmonella dublin (strain CT_02021853)).